The following is a 361-amino-acid chain: Tryptophan--tRNA ligase, mitochondrial (361 aa).

The N-terminal 16 residues, 1–16 (MAKLPKITSLLPHSRV), are a transit peptide targeting the mitochondrion. Residues glutamine 21 and 27–30 (HIGN) each bind ATP. The short motif at 22-30 (PTGIPHIGN) is the 'HIGH' region element. Aspartate 165 is a binding site for L-tryptophan. ATP is bound by residues 177–179 (GKD), 225–229 (KMSKS), and lysine 228. The 'KMSKS' region motif lies at 225-229 (KMSKS).

Belongs to the class-I aminoacyl-tRNA synthetase family. As to quaternary structure, homodimer.

It is found in the mitochondrion matrix. It carries out the reaction tRNA(Trp) + L-tryptophan + ATP = L-tryptophyl-tRNA(Trp) + AMP + diphosphate + H(+). In Schizosaccharomyces pombe (strain 972 / ATCC 24843) (Fission yeast), this protein is Tryptophan--tRNA ligase, mitochondrial.